The sequence spans 660 residues: Probable rhamnogalacturonate lyase B (660 aa).

Positions 1 to 20 (MRLSVSLGLASLWTAIGATA) are cleaved as a signal peptide. 11 N-linked (GlcNAc...) asparagine glycosylation sites follow: asparagine 22, asparagine 27, asparagine 109, asparagine 142, asparagine 238, asparagine 284, asparagine 432, asparagine 492, asparagine 532, asparagine 594, and asparagine 635.

The protein belongs to the polysaccharide lyase 4 family.

It localises to the secreted. The catalysed reaction is Endotype eliminative cleavage of L-alpha-rhamnopyranosyl-(1-&gt;4)-alpha-D-galactopyranosyluronic acid bonds of rhamnogalacturonan I domains in ramified hairy regions of pectin leaving L-rhamnopyranose at the reducing end and 4-deoxy-4,5-unsaturated D-galactopyranosyluronic acid at the non-reducing end.. In terms of biological role, pectinolytic enzymes consist of four classes of enzymes: pectin lyase, polygalacturonase, pectin methylesterase and rhamnogalacturonase. Degrades the rhamnogalacturonan I (RG-I) backbone of pectin. In Aspergillus terreus (strain NIH 2624 / FGSC A1156), this protein is Probable rhamnogalacturonate lyase B (rglB).